The following is a 388-amino-acid chain: Succinate--CoA ligase [ADP-forming] subunit beta (388 aa).

Residues 9–244 (KEILRKFGVA…LDEEDPAEIE (236 aa)) form the ATP-grasp domain. ATP contacts are provided by residues Lys46, 53–55 (GRG), Glu99, Ala102, and Glu107. Mg(2+)-binding residues include Asn199 and Asp213. Residues Asn264 and 321 to 323 (GIM) contribute to the substrate site.

It belongs to the succinate/malate CoA ligase beta subunit family. In terms of assembly, heterotetramer of two alpha and two beta subunits. The cofactor is Mg(2+).

It catalyses the reaction succinate + ATP + CoA = succinyl-CoA + ADP + phosphate. The enzyme catalyses GTP + succinate + CoA = succinyl-CoA + GDP + phosphate. The protein operates within carbohydrate metabolism; tricarboxylic acid cycle; succinate from succinyl-CoA (ligase route): step 1/1. Its function is as follows. Succinyl-CoA synthetase functions in the citric acid cycle (TCA), coupling the hydrolysis of succinyl-CoA to the synthesis of either ATP or GTP and thus represents the only step of substrate-level phosphorylation in the TCA. The beta subunit provides nucleotide specificity of the enzyme and binds the substrate succinate, while the binding sites for coenzyme A and phosphate are found in the alpha subunit. The protein is Succinate--CoA ligase [ADP-forming] subunit beta of Burkholderia thailandensis (strain ATCC 700388 / DSM 13276 / CCUG 48851 / CIP 106301 / E264).